A 298-amino-acid polypeptide reads, in one-letter code: ATP synthase gamma chain (298 aa).

This sequence belongs to the ATPase gamma chain family. In terms of assembly, F-type ATPases have 2 components, CF(1) - the catalytic core - and CF(0) - the membrane proton channel. CF(1) has five subunits: alpha(3), beta(3), gamma(1), delta(1), epsilon(1). CF(0) has three main subunits: a, b and c.

Its subcellular location is the cell inner membrane. In terms of biological role, produces ATP from ADP in the presence of a proton gradient across the membrane. The gamma chain is believed to be important in regulating ATPase activity and the flow of protons through the CF(0) complex. The sequence is that of ATP synthase gamma chain from Desulforapulum autotrophicum (strain ATCC 43914 / DSM 3382 / VKM B-1955 / HRM2) (Desulfobacterium autotrophicum).